Reading from the N-terminus, the 189-residue chain is Elongation factor P (189 aa).

It belongs to the elongation factor P family.

It localises to the cytoplasm. It functions in the pathway protein biosynthesis; polypeptide chain elongation. Functionally, involved in peptide bond synthesis. Stimulates efficient translation and peptide-bond synthesis on native or reconstituted 70S ribosomes in vitro. Probably functions indirectly by altering the affinity of the ribosome for aminoacyl-tRNA, thus increasing their reactivity as acceptors for peptidyl transferase. This is Elongation factor P from Chloroflexus aggregans (strain MD-66 / DSM 9485).